A 1574-amino-acid chain; its full sequence is DNA-directed RNA polymerase subunit beta' (1574 aa).

The Zn(2+) site is built by Cys64, Cys66, Cys79, and Cys82. Asp590, Asp592, and Asp594 together coordinate Mg(2+). The Zn(2+) site is built by Cys928, Cys1002, Cys1009, and Cys1012.

This sequence belongs to the RNA polymerase beta' chain family. As to quaternary structure, the RNAP catalytic core consists of 2 alpha, 1 beta, 1 beta' and 1 omega subunit. When a sigma factor is associated with the core the holoenzyme is formed, which can initiate transcription. Mg(2+) is required as a cofactor. Requires Zn(2+) as cofactor.

The enzyme catalyses RNA(n) + a ribonucleoside 5'-triphosphate = RNA(n+1) + diphosphate. Functionally, DNA-dependent RNA polymerase catalyzes the transcription of DNA into RNA using the four ribonucleoside triphosphates as substrates. This chain is DNA-directed RNA polymerase subunit beta', found in Aquifex aeolicus (strain VF5).